Consider the following 384-residue polypeptide: tRNA(Met) cytidine acetate ligase (384 aa).

ATP is bound by residues 7–20 (VAEY…HEFL), glycine 101, asparagine 153, and arginine 178.

The protein belongs to the TmcAL family.

The protein resides in the cytoplasm. It carries out the reaction cytidine(34) in elongator tRNA(Met) + acetate + ATP = N(4)-acetylcytidine(34) in elongator tRNA(Met) + AMP + diphosphate. In terms of biological role, catalyzes the formation of N(4)-acetylcytidine (ac(4)C) at the wobble position of elongator tRNA(Met), using acetate and ATP as substrates. First activates an acetate ion to form acetyladenylate (Ac-AMP) and then transfers the acetyl group to tRNA to form ac(4)C34. The protein is tRNA(Met) cytidine acetate ligase of Lactobacillus delbrueckii subsp. bulgaricus (strain ATCC 11842 / DSM 20081 / BCRC 10696 / JCM 1002 / NBRC 13953 / NCIMB 11778 / NCTC 12712 / WDCM 00102 / Lb 14).